A 152-amino-acid polypeptide reads, in one-letter code: Peptide deformylase (152 aa).

Fe cation contacts are provided by Cys-91 and His-133. Glu-134 is an active-site residue. His-137 contacts Fe cation.

It belongs to the polypeptide deformylase family. Fe(2+) serves as cofactor.

The enzyme catalyses N-terminal N-formyl-L-methionyl-[peptide] + H2O = N-terminal L-methionyl-[peptide] + formate. Its function is as follows. Removes the formyl group from the N-terminal Met of newly synthesized proteins. Requires at least a dipeptide for an efficient rate of reaction. N-terminal L-methionine is a prerequisite for activity but the enzyme has broad specificity at other positions. The chain is Peptide deformylase from Wigglesworthia glossinidia brevipalpis.